A 154-amino-acid chain; its full sequence is NADPH-dependent 7-cyano-7-deazaguanine reductase (154 aa).

Residue cysteine 52 is the Thioimide intermediate of the active site. Aspartate 59 functions as the Proton donor in the catalytic mechanism. Residues 74 to 76 (VES) and 93 to 94 (HE) contribute to the substrate site.

It belongs to the GTP cyclohydrolase I family. QueF type 1 subfamily.

It is found in the cytoplasm. It catalyses the reaction 7-aminomethyl-7-carbaguanine + 2 NADP(+) = 7-cyano-7-deazaguanine + 2 NADPH + 3 H(+). Its pathway is tRNA modification; tRNA-queuosine biosynthesis. Its function is as follows. Catalyzes the NADPH-dependent reduction of 7-cyano-7-deazaguanine (preQ0) to 7-aminomethyl-7-deazaguanine (preQ1). This Ruegeria sp. (strain TM1040) (Silicibacter sp.) protein is NADPH-dependent 7-cyano-7-deazaguanine reductase.